Reading from the N-terminus, the 442-residue chain is Histidine--tRNA ligase (442 aa).

Belongs to the class-II aminoacyl-tRNA synthetase family. As to quaternary structure, homodimer.

It localises to the cytoplasm. The enzyme catalyses tRNA(His) + L-histidine + ATP = L-histidyl-tRNA(His) + AMP + diphosphate + H(+). The protein is Histidine--tRNA ligase of Wolinella succinogenes (strain ATCC 29543 / DSM 1740 / CCUG 13145 / JCM 31913 / LMG 7466 / NCTC 11488 / FDC 602W) (Vibrio succinogenes).